The following is a 352-amino-acid chain: Phosphoribosylformylglycinamidine cyclo-ligase (352 aa).

This sequence belongs to the AIR synthase family.

The protein resides in the cytoplasm. It carries out the reaction 2-formamido-N(1)-(5-O-phospho-beta-D-ribosyl)acetamidine + ATP = 5-amino-1-(5-phospho-beta-D-ribosyl)imidazole + ADP + phosphate + H(+). The protein operates within purine metabolism; IMP biosynthesis via de novo pathway; 5-amino-1-(5-phospho-D-ribosyl)imidazole from N(2)-formyl-N(1)-(5-phospho-D-ribosyl)glycinamide: step 2/2. The protein is Phosphoribosylformylglycinamidine cyclo-ligase of Pseudomonas savastanoi pv. phaseolicola (strain 1448A / Race 6) (Pseudomonas syringae pv. phaseolicola (strain 1448A / Race 6)).